A 146-amino-acid polypeptide reads, in one-letter code: Sperm surface protein Sp17 (146 aa).

The segment covering 76–88 (EHESEKCEAEEKS) has biased composition (basic and acidic residues). The interval 76–109 (EHESEKCEAEEKSQSVTEEETPVLTIDSEDDKDK) is disordered. The segment covering 92-108 (TEEETPVLTIDSEDDKD) has biased composition (acidic residues). The IQ domain occupies 110–139 (EEMAALKIQAAFRGHLAREDVKKIRTNKAE).

As to quaternary structure, homodimer. May interact with ROPN1. The N-terminus is blocked. In terms of tissue distribution, testis- and sperm-specific.

The protein localises to the membrane. In terms of biological role, sperm surface zona pellucida binding protein. Helps to bind spermatozoa to the zona pellucida with high affinity. Might function in binding zona pellucida and carbohydrates. This is Sperm surface protein Sp17 (SPA17) from Oryctolagus cuniculus (Rabbit).